Reading from the N-terminus, the 175-residue chain is Inner membrane protein p54 (175 aa).

Residues 32–52 (CTILVAIVVLIIIIIVLIYLF) traverse the membrane as a helical segment. Positions 79-89 (QWAGATPQPGT) are enriched in polar residues. Residues 79–121 (QWAGATPQPGTSKPAGATTGNVGKPITDRPATDRPVTNNPVTD) are disordered. The interval 141 to 153 (YTTATTQNTASQT) is interaction with host DYNLL1.

The protein belongs to the asfivirus envelope protein p54 family. Interacts with the host light chain cytoplasmic dynein DYNLL1; this interaction is critical for intracellular microtubule-dependent virus transport toward viral factories.

Its subcellular location is the virion membrane. The protein resides in the host cytoplasm. It is found in the host cytoskeleton. It localises to the host endoplasmic reticulum membrane. Its function is as follows. Inner envelope protein involved, through its interaction with host dynein, in the intracellular microtubule-dependent transport of viral capsid toward viral factories. Seems to induce caspase-3 activation and apoptosis. Plays a role in virion morphogenesis by recruiting and transforming the host ER membranes into the precursors of the viral envelope. Involved in virus attachment to the host cell. The polypeptide is Inner membrane protein p54 (African swine fever virus (isolate Pig/Kenya/KEN-50/1950) (ASFV)).